Consider the following 213-residue polypeptide: Uridine kinase (213 aa).

15–22 is a binding site for ATP; that stretch reads GASASGKS.

The protein belongs to the uridine kinase family.

It localises to the cytoplasm. It catalyses the reaction uridine + ATP = UMP + ADP + H(+). The catalysed reaction is cytidine + ATP = CMP + ADP + H(+). It participates in pyrimidine metabolism; CTP biosynthesis via salvage pathway; CTP from cytidine: step 1/3. Its pathway is pyrimidine metabolism; UMP biosynthesis via salvage pathway; UMP from uridine: step 1/1. The polypeptide is Uridine kinase (Pectobacterium carotovorum subsp. carotovorum (strain PC1)).